A 1110-amino-acid polypeptide reads, in one-letter code: Guanylate cyclase 2D (1110 aa).

The N-terminal stretch at 1-66 is a signal peptide; that stretch reads MAGLQQGCHP…ADSLSLPAWA (66 aa). The Extracellular segment spans residues 67 to 475; it reads RETFTLGVLG…PNTLCIRGVQ (409 aa). C121 and C149 are disulfide-bonded. Residues N304 and N374 are each glycosylated (N-linked (GlcNAc...) asparagine). A helical transmembrane segment spans residues 476 to 500; it reads PLGSLLTLTITCVLALVGGFLAYFI. The Cytoplasmic portion of the chain corresponds to 501–1110; the sequence is RLGLQQLRLL…TGFAKLARVG (610 aa). The interval 529 to 556 is disordered; the sequence is TPSRRRPHVDSGSESRSVVDGGSPQSVI. Positions 541–818 constitute a Protein kinase domain; the sequence is SESRSVVDGG…PSLDQIYTQF (278 aa). Positions 880-921 are interaction with NCALD; sequence MGTTVEPEYFDQVTIYFSDIVGFTTISALSEPIEVVGFLNDL. Residues 893-1023 form the Guanylate cyclase domain; the sequence is TIYFSDIVGF…DTVNTASRME (131 aa).

It belongs to the adenylyl cyclase class-4/guanylyl cyclase family. As to quaternary structure, interacts (via the catalytic domain) with NCALD. As to expression, specifically expressed in a subpopulation of olfactory sensory neurons. Expressed in the cilia of the olfactory epithelium.

It localises to the cell projection. The protein resides in the cilium membrane. The enzyme catalyses GTP = 3',5'-cyclic GMP + diphosphate. With respect to regulation, activated by Ca(2+). Activated by NCALD in a Ca(2+)-dependent fashion. In terms of biological role, functions as an olfactory receptor activated by a urine odorant, uroguanylin. Activated as well by the volatile semiochemicals carbon disulfide (CS2) and carbon dioxide (CO2). Has guanylate cyclase activity upon binding of the ligand. Activation of GUCY2D neurons leads to the cGMP-dependent activation of the CNGA3 channels, membrane depolarization and an increase in action potential frequency. Signaling pathways activated by GUCY2D may trigger social behaviors such as acquisition of food preference. The sequence is that of Guanylate cyclase 2D (Gucy2d) from Rattus norvegicus (Rat).